A 1264-amino-acid chain; its full sequence is uncharacterized protein (1264 aa).

The N-terminal stretch at 1-18 (MMRKYLILLILLPALAVG) is a signal peptide. A helical transmembrane segment spans residues 1215–1235 (SYTVLGVVVITILTMSIILCL).

Its subcellular location is the host membrane. This is an uncharacterized protein from Ostreid herpesvirus 1 (isolate France) (OsHV-1).